We begin with the raw amino-acid sequence, 934 residues long: uncharacterized protein (934 aa).

The N-terminal stretch at Met1–Ala24 is a signal peptide. Cys25 carries the N-palmitoyl cysteine lipid modification. Cys25 carries the S-diacylglycerol cysteine lipid modification. The tract at residues Ser111–Lys131 is disordered. Positions Lys119–Lys131 are enriched in polar residues.

Its subcellular location is the cell membrane. This is an uncharacterized protein from Mycoplasma genitalium (strain ATCC 33530 / DSM 19775 / NCTC 10195 / G37) (Mycoplasmoides genitalium).